Consider the following 298-residue polypeptide: O-glycoside alpha-1,2-mannosyltransferase homolog 6 (298 aa).

Glutamate 220 serves as the catalytic Nucleophile.

Belongs to the glycosyltransferase 15 family.

Its subcellular location is the cytoplasm. The protein resides in the nucleus. In terms of biological role, probable mannosyltransferase involved in O-glycosylation of cell wall and secreted proteins. The chain is O-glycoside alpha-1,2-mannosyltransferase homolog 6 (omh6) from Schizosaccharomyces pombe (strain 972 / ATCC 24843) (Fission yeast).